The chain runs to 711 residues: Early transcription factor 82 kDa subunit (711 aa).

The protein belongs to the poxviridae VETF large subunit family. In terms of assembly, heterodimer of a 70 kDa and a 82 kDa subunit. Part of the early transcription complex composed of ETF, RAP94, and the DNA-directed RNA polymerase.

It is found in the virion. Its function is as follows. Acts with RNA polymerase to initiate transcription from early gene promoters. Is recruited by the RPO-associated protein of 94 kDa (RAP94) to form the early transcription complex, which also contains the core RNA polymerase. ETF heterodimer binds to early gene promoters. This Oryctolagus cuniculus (Rabbit) protein is Early transcription factor 82 kDa subunit (VETFL).